The sequence spans 246 residues: Chaperone protein SefB (246 aa).

The N-terminal stretch at 1–24 (MYILNKFIRRTVIFFFFCYLPIAS) is a signal peptide. An intrachain disulfide couples cysteine 124 to cysteine 155.

It belongs to the periplasmic pilus chaperone family.

The protein resides in the periplasm. Its function is as follows. Required for the biogenesis of the SefA (SEF14) fimbria. This is Chaperone protein SefB (sefB) from Salmonella enteritidis.